The sequence spans 1845 residues: Proteasome activator complex subunit 4 (1845 aa).

Basic and acidic residues predominate over residues 1–13 (MEPAERAGGRDPL). Positions 1–26 (MEPAERAGGRDPLEPGGRPGPDPQGF) are disordered. HEAT repeat units follow at residues 475–519 (PEGP…LVDC) and 1000–1039 (NFCC…NHSG). Position 1123 is a phosphoserine (S1123). HEAT repeat units follow at residues 1181–1219 (RVLP…QLKR) and 1356–1394 (DAFL…GSKH). S1616 carries the phosphoserine modification. HEAT repeat units lie at residues 1638-1676 (PHQV…YNLF) and 1682-1720 (EDAV…CNFL). The tract at residues 1652–1740 (ARSSSWHARY…EQLCKTKLPK (89 aa)) is bromodomain-like (BRDL).

This sequence belongs to the BLM10 family. In terms of assembly, homodimer. Component of the spermatoproteasome, a form of the proteasome specifically found in testis. Interacts with the 20S and 26S proteasomes. Phosphorylated.

Its subcellular location is the cytoplasm. The protein localises to the cytosol. It is found in the nucleus. The protein resides in the nucleus speckle. In terms of biological role, associated component of the proteasome that specifically recognizes acetylated histones and promotes ATP- and ubiquitin-independent degradation of core histones during spermatogenesis and DNA damage response. Recognizes and binds acetylated histones via its bromodomain-like (BRDL) region and activates the proteasome by opening the gated channel for substrate entry. Binds to the core proteasome via its C-terminus, which occupies the same binding sites as the proteasomal ATPases, opening the closed structure of the proteasome via an active gating mechanism. Component of the spermatoproteasome, a form of the proteasome specifically found in testis: binds to acetylated histones and promotes degradation of histones, thereby participating actively to the exchange of histones during spermatogenesis. Also involved in DNA damage response in somatic cells, by promoting degradation of histones following DNA double-strand breaks. The sequence is that of Proteasome activator complex subunit 4 (PSME4) from Bos taurus (Bovine).